The sequence spans 164 residues: MKCKPNQTRTYDPEGFKKRAACLCFRSEREDEVLLVSSSRYPDRWIVPGGGMEPEEEPDGAAVREVYEEAGVKGKLGRLLGVFEQNQDRKHRTYVFVLTVTELLEDWEDSVSIGRKREWFKIEDAIKVLQCHKPVHAEYLEKLKLGGSPTNGNSAAPSPPESEP.

Substrate contacts are provided by residues Arg9, 17-19 (KKR), and 38-40 (SSR). A Nudix hydrolase domain is found at 17-144 (KKRAACLCFR…VHAEYLEKLK (128 aa)). Mg(2+) is bound by residues Gly49 and Glu65. A Nudix box motif is present at residues 50 to 71 (GGMEPEEEPDGAAVREVYEEAG). The active-site Proton acceptor is Glu68. Glu69 lines the Mg(2+) pocket. Substrate-binding positions include 89 to 91 (RKH), Arg115, and Lys133. A disordered region spans residues 144–164 (KLGGSPTNGNSAAPSPPESEP).

This sequence belongs to the Nudix hydrolase family. DIPP subfamily. It depends on Mg(2+) as a cofactor. Mn(2+) is required as a cofactor. Mainly expressed in testis, liver kidney and, at lower level, in heart, brain, spleen, lung and skeletal muscle.

It is found in the cytoplasm. It catalyses the reaction diphospho-myo-inositol polyphosphate + H2O = myo-inositol polyphosphate + phosphate.. It carries out the reaction P(1),P(6)-bis(5'-adenosyl) hexaphosphate + H2O = adenosine 5'-pentaphosphate + AMP + 2 H(+). The enzyme catalyses P(1),P(5)-bis(5'-adenosyl) pentaphosphate + H2O = adenosine 5'-tetraphosphate + AMP + 2 H(+). Its function is as follows. Cleaves a beta-phosphate from the diphosphate groups in PP-InsP5 (diphosphoinositol pentakisphosphate), suggesting that it may play a role in signal transduction. Also able to catalyze the hydrolysis of dinucleoside oligophosphates, with Ap6A and Ap5A being the preferred substrates. The major reaction products are ADP and p4a from Ap6A and ADP and ATP from Ap5A. Also able to hydrolyze 5-phosphoribose 1-diphosphate; however, the relevance of such activity in vivo remains unclear. The protein is Diphosphoinositol polyphosphate phosphohydrolase 3-alpha of Mus musculus (Mouse).